The chain runs to 255 residues: 5'-nucleotidase SurE (255 aa).

A divalent metal cation is bound by residues Asp8, Asp9, Ser39, and Asn91.

Belongs to the SurE nucleotidase family. It depends on a divalent metal cation as a cofactor.

The protein localises to the cytoplasm. It carries out the reaction a ribonucleoside 5'-phosphate + H2O = a ribonucleoside + phosphate. Its function is as follows. Nucleotidase that shows phosphatase activity on nucleoside 5'-monophosphates. The sequence is that of 5'-nucleotidase SurE from Acinetobacter baumannii (strain ATCC 17978 / DSM 105126 / CIP 53.77 / LMG 1025 / NCDC KC755 / 5377).